The sequence spans 265 residues: Cell adhesion molecule CEACAM10 (265 aa).

A signal peptide spans 1–33; sequence MELASAHLHKGQVPWVGLLLTASLLTYWSPATT. 2 consecutive Ig-like V-type domains span residues 35-142 and 155-262; these read QVTV…HVHP and QVTV…NVHA. 3 N-linked (GlcNAc...) asparagine glycosylation sites follow: Asn-44, Asn-87, and Asn-224.

Belongs to the immunoglobulin superfamily. CEA family. In terms of tissue distribution, abundant in seminal vesicle and traces in epididymis and prostate (at protein level). Highly expressed in seminal vesicle, minor in colon and placenta and, to a lesser extent, in small intestine, caecum, stomach, salivary gland and bone marrow.

It is found in the secreted. Its subcellular location is the extracellular space. May interact with other CEACAM proteins on the sperm surface. This is Cell adhesion molecule CEACAM10 from Mus musculus (Mouse).